The primary structure comprises 150 residues: T-complex protein 1 subunit beta (150 aa).

Asp-35 serves as a coordination point for Mg(2+). ADP contacts are provided by Gly-36, Thr-37, Thr-38, and Ser-39. The ATP site is built by Gly-36, Thr-37, and Thr-38.

Belongs to the TCP-1 chaperonin family. As to quaternary structure, component of the chaperonin-containing T-complex (TRiC), a hexadecamer composed of two identical back-to-back stacked rings enclosing a protein folding chamber. Each ring is made up of eight different subunits: TCP1/CCT1, CCT2, CCT3, CCT4, CCT5, CCT6A/CCT6, CCT7, CCT8. Interacts with PACRG. Interacts with FLCN. Interacts with DLEC1. Interacts with SVEP1.

The protein localises to the cytoplasm. It carries out the reaction ATP + H2O = ADP + phosphate + H(+). Its function is as follows. Component of the chaperonin-containing T-complex (TRiC), a molecular chaperone complex that assists the folding of actin, tubulin and other proteins upon ATP hydrolysis. The TRiC complex mediates the folding of WRAP53/TCAB1, thereby regulating telomere maintenance. As part of the TRiC complex may play a role in the assembly of BBSome, a complex involved in ciliogenesis regulating transports vesicles to the cilia. The polypeptide is T-complex protein 1 subunit beta (Mesocricetus auratus (Golden hamster)).